We begin with the raw amino-acid sequence, 136 residues long: Glutamyl-tRNA(Gln) amidotransferase subunit C, mitochondrial (136 aa).

Residues 1-27 (MWARAVHLGLRAAARGRRGFTSKADPQ) constitute a mitochondrion transit peptide.

It belongs to the GatC family. As to quaternary structure, subunit of the heterotrimeric GatCAB amidotransferase (AdT) complex, composed of A (QRSL1), B (GATB) and C (GATC) subunits.

The protein localises to the mitochondrion. The catalysed reaction is L-glutamyl-tRNA(Gln) + L-glutamine + ATP + H2O = L-glutaminyl-tRNA(Gln) + L-glutamate + ADP + phosphate + H(+). Functionally, allows the formation of correctly charged Gln-tRNA(Gln) through the transamidation of misacylated Glu-tRNA(Gln) in the mitochondria. The reaction takes place in the presence of glutamine and ATP through an activated gamma-phospho-Glu-tRNA(Gln). This Bos taurus (Bovine) protein is Glutamyl-tRNA(Gln) amidotransferase subunit C, mitochondrial.